Consider the following 232-residue polypeptide: Orotate phosphoribosyltransferase (232 aa).

5-phospho-alpha-D-ribose 1-diphosphate-binding positions include arginine 107, lysine 108, lysine 111, and 133-141 (EDLTTDGGS). Threonine 137 serves as a coordination point for orotate.

Belongs to the purine/pyrimidine phosphoribosyltransferase family. PyrE subfamily. Homodimer. Requires Mg(2+) as cofactor.

It catalyses the reaction orotidine 5'-phosphate + diphosphate = orotate + 5-phospho-alpha-D-ribose 1-diphosphate. It participates in pyrimidine metabolism; UMP biosynthesis via de novo pathway; UMP from orotate: step 1/2. Functionally, catalyzes the transfer of a ribosyl phosphate group from 5-phosphoribose 1-diphosphate to orotate, leading to the formation of orotidine monophosphate (OMP). The sequence is that of Orotate phosphoribosyltransferase from Cereibacter sphaeroides (strain KD131 / KCTC 12085) (Rhodobacter sphaeroides).